The primary structure comprises 469 residues: COP9 signalosome complex subunit 5 (469 aa).

Residues 63-200 (TYISSLALCK…IGAFRTFPDN (138 aa)) form the MPN domain. Residues H146, H148, and D159 each coordinate Zn(2+). The short motif at 146-159 (HSHPGYGCWLSGID) is the JAMM motif element. Disordered stretches follow at residues 201–220 (YKSPDSAAPTNNTRGVPPSK) and 331–404 (YDSF…KRPM). The segment covering 344-353 (DEMDDESDLD) has biased composition (acidic residues).

It belongs to the peptidase M67A family. CSN5 subfamily. In terms of assembly, component of the COP9 signalosome (CSN) complex.

The protein localises to the cytoplasm. Its subcellular location is the nucleus. In terms of biological role, catalytic Component of the COP9 signalosome (CSN) complex that acts as an regulator of the ubiquitin (Ubl) conjugation pathway by mediating the deneddylation of the cullin subunit of SCF-type E3 ubiquitin-protein ligase complexes. The CSN complex is involved in the regulation of the mating pheromone response. In Debaryomyces hansenii (strain ATCC 36239 / CBS 767 / BCRC 21394 / JCM 1990 / NBRC 0083 / IGC 2968) (Yeast), this protein is COP9 signalosome complex subunit 5 (RRI1).